Here is a 322-residue protein sequence, read N- to C-terminus: Tetraacyldisaccharide 4'-kinase (322 aa).

Position 54–61 (54–61) interacts with ATP; it reads SVGGTGKT.

This sequence belongs to the LpxK family.

It catalyses the reaction a lipid A disaccharide + ATP = a lipid IVA + ADP + H(+). It participates in glycolipid biosynthesis; lipid IV(A) biosynthesis; lipid IV(A) from (3R)-3-hydroxytetradecanoyl-[acyl-carrier-protein] and UDP-N-acetyl-alpha-D-glucosamine: step 6/6. Its function is as follows. Transfers the gamma-phosphate of ATP to the 4'-position of a tetraacyldisaccharide 1-phosphate intermediate (termed DS-1-P) to form tetraacyldisaccharide 1,4'-bis-phosphate (lipid IVA). The protein is Tetraacyldisaccharide 4'-kinase of Francisella philomiragia subsp. philomiragia (strain ATCC 25017 / CCUG 19701 / FSC 153 / O#319-036).